Reading from the N-terminus, the 300-residue chain is Tyrosine recombinase XerC (300 aa).

The Core-binding (CB) domain maps to threonine 2–leucine 88. In terms of domain architecture, Tyr recombinase spans arginine 109–methionine 294. Catalysis depends on residues arginine 150, lysine 174, histidine 246, arginine 249, and histidine 272. Tyrosine 281 acts as the O-(3'-phospho-DNA)-tyrosine intermediate in catalysis.

This sequence belongs to the 'phage' integrase family. XerC subfamily. As to quaternary structure, forms a cyclic heterotetrameric complex composed of two molecules of XerC and two molecules of XerD.

It localises to the cytoplasm. Site-specific tyrosine recombinase, which acts by catalyzing the cutting and rejoining of the recombining DNA molecules. The XerC-XerD complex is essential to convert dimers of the bacterial chromosome into monomers to permit their segregation at cell division. It also contributes to the segregational stability of plasmids. The protein is Tyrosine recombinase XerC of Listeria innocua serovar 6a (strain ATCC BAA-680 / CLIP 11262).